A 267-amino-acid chain; its full sequence is L-aspartate dehydrogenase (267 aa).

Positions 124 and 190 each coordinate NAD(+). His220 is an active-site residue.

It belongs to the L-aspartate dehydrogenase family.

The catalysed reaction is L-aspartate + NADP(+) + H2O = oxaloacetate + NH4(+) + NADPH + H(+). It carries out the reaction L-aspartate + NAD(+) + H2O = oxaloacetate + NH4(+) + NADH + H(+). The protein operates within cofactor biosynthesis; NAD(+) biosynthesis; iminoaspartate from L-aspartate (dehydrogenase route): step 1/1. Its function is as follows. Specifically catalyzes the NAD or NADP-dependent dehydrogenation of L-aspartate to iminoaspartate. The polypeptide is L-aspartate dehydrogenase (Pseudomonas aeruginosa (strain ATCC 15692 / DSM 22644 / CIP 104116 / JCM 14847 / LMG 12228 / 1C / PRS 101 / PAO1)).